Here is a 249-residue protein sequence, read N- to C-terminus: Chitooligosaccharide deacetylase (249 aa).

H61 and H125 together coordinate Mg(2+).

The protein belongs to the YdjC deacetylase family. ChbG subfamily. In terms of assembly, homodimer. It depends on Mg(2+) as a cofactor.

The protein resides in the cytoplasm. It carries out the reaction N,N'-diacetylchitobiose + H2O = N-acetyl-beta-D-glucosaminyl-(1-&gt;4)-D-glucosamine + acetate. It catalyses the reaction diacetylchitobiose-6'-phosphate + H2O = N'-monoacetylchitobiose-6'-phosphate + acetate. The protein operates within glycan degradation; chitin degradation. Involved in the degradation of chitin. ChbG is essential for growth on the acetylated chitooligosaccharides chitobiose and chitotriose but is dispensable for growth on cellobiose and chitosan dimer, the deacetylated form of chitobiose. Deacetylation of chitobiose-6-P and chitotriose-6-P is necessary for both the activation of the chb promoter by the regulatory protein ChbR and the hydrolysis of phosphorylated beta-glucosides by the phospho-beta-glucosidase ChbF. Catalyzes the removal of only one acetyl group from chitobiose-6-P to yield monoacetylchitobiose-6-P, the inducer of ChbR and the substrate of ChbF. The polypeptide is Chitooligosaccharide deacetylase (Escherichia coli O7:K1 (strain IAI39 / ExPEC)).